The sequence spans 362 residues: Probable dual-specificity RNA methyltransferase RlmN (362 aa).

Glu-91 functions as the Proton acceptor in the catalytic mechanism. The region spanning 97–329 (QHYGLSVCVT…KKNGVNCVVR (233 aa)) is the Radical SAM core domain. An intrachain disulfide couples Cys-104 to Cys-340. The [4Fe-4S] cluster site is built by Cys-111, Cys-115, and Cys-118. S-adenosyl-L-methionine is bound by residues 163–164 (GE), Ser-195, 218–220 (SLH), and Asn-296. Cys-340 (S-methylcysteine intermediate) is an active-site residue.

The protein belongs to the radical SAM superfamily. RlmN family. [4Fe-4S] cluster is required as a cofactor.

The protein localises to the cytoplasm. The catalysed reaction is adenosine(2503) in 23S rRNA + 2 reduced [2Fe-2S]-[ferredoxin] + 2 S-adenosyl-L-methionine = 2-methyladenosine(2503) in 23S rRNA + 5'-deoxyadenosine + L-methionine + 2 oxidized [2Fe-2S]-[ferredoxin] + S-adenosyl-L-homocysteine. It catalyses the reaction adenosine(37) in tRNA + 2 reduced [2Fe-2S]-[ferredoxin] + 2 S-adenosyl-L-methionine = 2-methyladenosine(37) in tRNA + 5'-deoxyadenosine + L-methionine + 2 oxidized [2Fe-2S]-[ferredoxin] + S-adenosyl-L-homocysteine. In terms of biological role, specifically methylates position 2 of adenine 2503 in 23S rRNA and position 2 of adenine 37 in tRNAs. This chain is Probable dual-specificity RNA methyltransferase RlmN, found in Streptococcus sanguinis (strain SK36).